The chain runs to 630 residues: Molybdenum cofactor biosynthesis protein 1 (630 aa).

The 238-residue stretch at 61–298 folds into the Radical SAM core domain; that stretch reads RFNRHHTYLR…SKTYHVPGFK (238 aa). Position 70 (Arg-70) interacts with GTP. The [4Fe-4S] cluster site is built by Cys-77 and Cys-81. Tyr-83 contacts S-adenosyl-L-methionine. Residue Cys-84 participates in [4Fe-4S] cluster binding. Arg-120 lines the GTP pocket. Gly-124 contributes to the S-adenosyl-L-methionine binding site. Thr-151 is a GTP binding site. An S-adenosyl-L-methionine-binding site is contributed by Ser-175. GTP is bound at residue Lys-212. Position 246 (Met-246) interacts with S-adenosyl-L-methionine. Cys-312 and Cys-315 together coordinate [4Fe-4S] cluster. Residue 317–319 coordinates GTP; it reads RLR. Residue Cys-329 participates in [4Fe-4S] cluster binding. The interval 402–629 is molybdenum cofactor biosynthesis protein C; it reads KEVKNYLLKL…GGKSSSPQIT (228 aa). Asp-599 (for molybdenum cofactor biosynthesis protein C activity) is an active-site residue.

In the C-terminal section; belongs to the MoaC family. It in the N-terminal section; belongs to the radical SAM superfamily. MoaA family. Isoform mocs1a and isoform mocs1b probably form a heterooligomer. Requires [4Fe-4S] cluster as cofactor.

The catalysed reaction is GTP + AH2 + S-adenosyl-L-methionine = (8S)-3',8-cyclo-7,8-dihydroguanosine 5'-triphosphate + 5'-deoxyadenosine + L-methionine + A + H(+). The enzyme catalyses (8S)-3',8-cyclo-7,8-dihydroguanosine 5'-triphosphate = cyclic pyranopterin phosphate + diphosphate. It functions in the pathway cofactor biosynthesis; molybdopterin biosynthesis. In terms of biological role, isoform mocs1a and isoform mocs1b probably form a complex that catalyzes the conversion of 5'-GTP to cyclic pyranopterin monophosphate (cPMP). mocs1a catalyzes the cyclization of GTP to (8S)-3',8-cyclo-7,8-dihydroguanosine 5'-triphosphate and mocs1b catalyzes the subsequent conversion of (8S)-3',8-cyclo-7,8-dihydroguanosine 5'-triphosphate to cPMP. In Dictyostelium discoideum (Social amoeba), this protein is Molybdenum cofactor biosynthesis protein 1 (mocs1).